Reading from the N-terminus, the 141-residue chain is Large ribosomal subunit protein uL11A (141 aa).

It belongs to the universal ribosomal protein uL11 family. As to quaternary structure, part of the ribosomal stalk of the 50S ribosomal subunit. Interacts with L10 and the large rRNA to form the base of the stalk. L10 forms an elongated spine to which L12 dimers bind in a sequential fashion forming a multimeric L10(L12)X complex. In terms of processing, one or more lysine residues are methylated.

Forms part of the ribosomal stalk which helps the ribosome interact with GTP-bound translation factors. The chain is Large ribosomal subunit protein uL11A from Bacillus cereus (strain ATCC 14579 / DSM 31 / CCUG 7414 / JCM 2152 / NBRC 15305 / NCIMB 9373 / NCTC 2599 / NRRL B-3711).